The following is a 755-amino-acid chain: 3-isopropylmalate dehydratase (755 aa).

The [4Fe-4S] cluster site is built by Cys353, Cys413, and Cys416. 3 disordered regions span residues 427–446 (GERCASTSNRNFEGRQGAGG), 471–493 (LTPAQQDRPASPTPKKIETELEP), and 510–529 (DAPATGASPPSPAPSDAAGM). Residues 510-528 (DAPATGASPPSPAPSDAAG) are compositionally biased toward low complexity.

It belongs to the aconitase/IPM isomerase family. As to quaternary structure, monomer. The cofactor is [4Fe-4S] cluster.

It catalyses the reaction (2R,3S)-3-isopropylmalate = (2S)-2-isopropylmalate. It participates in amino-acid biosynthesis; L-leucine biosynthesis; L-leucine from 3-methyl-2-oxobutanoate: step 2/4. Catalyzes the isomerization between 2-isopropylmalate and 3-isopropylmalate, via the formation of 2-isopropylmaleate. This Rhizomucor pusillus protein is 3-isopropylmalate dehydratase (LEUA).